The primary structure comprises 414 residues: Chaperone protein dnaJ 39 (414 aa).

The span at 1-24 (MATHSSRSENKDAGEEDELRRRNP) shows a compositional bias: basic and acidic residues. The tract at residues 1–36 (MATHSSRSENKDAGEEDELRRRNPYEVLGIPSNSTD) is disordered. The 66-residue stretch at 23 to 88 (NPYEVLGIPS…ENRRLYDTTG (66 aa)) folds into the J domain. Residues 296–324 (EKESLRSTEAQIVSKRTELLKFEAEYHEV) are a coiled coil. The segment at 362-395 (TKQGSSKSRSWSKKKSSLLMEPREEGEVAVREEG) is disordered. Positions 382 to 395 (EPREEGEVAVREEG) are enriched in basic and acidic residues.

Belongs to the DnaJ family. C/III subfamily. Expressed constitutively at low levels in seedlings, roots, leaves, stems, flowers and siliques.

The protein resides in the membrane. Its function is as follows. Plays a continuous role in plant development probably in the structural organization of compartments. Seems to be involved in early gravitropic signal transduction within the gravity-perceiving cells (statocytes). This is Chaperone protein dnaJ 39 (ATJ39) from Arabidopsis thaliana (Mouse-ear cress).